The following is a 390-amino-acid chain: tRNA (guanine(26)-N(2))-dimethyltransferase (390 aa).

Positions 4–378 (HIIEEGLVKI…MPLDELKQLI (375 aa)) constitute a Trm1 methyltransferase domain. Residues Arg37, Arg67, Asp85, Asp112, and Ala113 each coordinate S-adenosyl-L-methionine. The Zn(2+) site is built by Cys245, Cys248, Cys265, and Cys268.

It belongs to the class I-like SAM-binding methyltransferase superfamily. Trm1 family.

The enzyme catalyses guanosine(26) in tRNA + 2 S-adenosyl-L-methionine = N(2)-dimethylguanosine(26) in tRNA + 2 S-adenosyl-L-homocysteine + 2 H(+). Functionally, dimethylates a single guanine residue at position 26 of a number of tRNAs using S-adenosyl-L-methionine as donor of the methyl groups. This chain is tRNA (guanine(26)-N(2))-dimethyltransferase, found in Methanosphaera stadtmanae (strain ATCC 43021 / DSM 3091 / JCM 11832 / MCB-3).